An 806-amino-acid polypeptide reads, in one-letter code: Acetyl-CoA decarbonylase/synthase complex subunit alpha 1 (806 aa).

[4Fe-4S] cluster contacts are provided by C73, C76, C77, C79, C84, and C94. A CO-binding site is contributed by H117. [Ni-4Fe-4S] cluster-binding residues include H250, C278, and C323. 2 4Fe-4S ferredoxin-type domains span residues 406–436 (SDEQ…IPEA) and 445–475 (FSYL…LSVI). The [4Fe-4S] cluster site is built by C417, C420, C423, C427, C455, C458, C461, and C465. C523, C552, and C587 together coordinate [Ni-4Fe-4S] cluster.

The protein belongs to the Ni-containing carbon monoxide dehydrogenase family. As to quaternary structure, heterotetramer of two alpha and two epsilon subunits. The ACDS complex is made up of alpha, epsilon, beta, gamma and delta subunits with a probable stoichiometry of (alpha(2)epsilon(2))(4)-beta(8)-(gamma(1)delta(1))(8). It depends on [4Fe-4S] cluster as a cofactor. [Ni-4Fe-4S] cluster is required as a cofactor.

It carries out the reaction CO + 2 oxidized [2Fe-2S]-[ferredoxin] + H2O = 2 reduced [2Fe-2S]-[ferredoxin] + CO2 + 2 H(+). It participates in one-carbon metabolism; methanogenesis from acetate. Functionally, part of the ACDS complex that catalyzes the reversible cleavage of acetyl-CoA, allowing growth on acetate as sole source of carbon and energy. The alpha-epsilon subcomponent functions as a carbon monoxide dehydrogenase. This Methanosarcina mazei (strain ATCC BAA-159 / DSM 3647 / Goe1 / Go1 / JCM 11833 / OCM 88) (Methanosarcina frisia) protein is Acetyl-CoA decarbonylase/synthase complex subunit alpha 1.